The chain runs to 335 residues: Beta-hexosaminidase (335 aa).

Substrate-binding positions include Asp-60, Arg-68, Arg-133, and 163–164 (KH). His-176 (proton donor/acceptor) is an active-site residue. The active-site Nucleophile is the Asp-247.

It belongs to the glycosyl hydrolase 3 family. NagZ subfamily.

The protein resides in the cytoplasm. The enzyme catalyses Hydrolysis of terminal non-reducing N-acetyl-D-hexosamine residues in N-acetyl-beta-D-hexosaminides.. The protein operates within cell wall biogenesis; peptidoglycan recycling. Its function is as follows. Plays a role in peptidoglycan recycling by cleaving the terminal beta-1,4-linked N-acetylglucosamine (GlcNAc) from peptide-linked peptidoglycan fragments, giving rise to free GlcNAc, anhydro-N-acetylmuramic acid and anhydro-N-acetylmuramic acid-linked peptides. The chain is Beta-hexosaminidase from Stenotrophomonas maltophilia (strain K279a).